The sequence spans 712 residues: Dipeptidyl-peptidase 7 (712 aa).

A signal peptide spans 1–23 (MQMKLKSILLGAALLLGASGVAK). Residue His-89 is the Charge relay system of the active site. A coiled-coil region spans residues 136–173 (TDKVEGQLKGITDEMERLRKAQEVCQELAKKENADENQ). Active-site charge relay system residues include Asp-225 and Ser-648.

It belongs to the peptidase S46 family.

The protein localises to the cell outer membrane. Is inhibited in vitro by typical serine protease inhibitors like diisopropyl fluorophosphate, Pefablock, and 3,4-dichloroisocoumarin, but not by typical cysteine class inhibitors such as E-64 or iododoacetic acid. Functionally, catalyzes the removal of dipeptides from the N-terminus of oligopeptides. Shows a broad specificity for both aliphatic and aromatic residues in the P1 position, with glycine or proline being not acceptable in this position. Most potently cleaves the synthetic substrate Met-Leu-methylcoumaryl-7-amide (Met-Leu-MCA), Leu-Arg-MCA and Lys-Ala-MCA to a lesser extent. Is likely involved in amino acid metabolism and bacterial growth of asaccharolytic P.gingivalis, that utilizes amino acids from extracellular proteinaceous nutrients as energy and carbon sources. The polypeptide is Dipeptidyl-peptidase 7 (Porphyromonas gingivalis (strain ATCC 33277 / DSM 20709 / CIP 103683 / JCM 12257 / NCTC 11834 / 2561)).